An 842-amino-acid polypeptide reads, in one-letter code: Translation initiation factor IF-2 (842 aa).

2 disordered regions span residues 42–91 (ETKR…NLSS) and 139–253 (LQKQ…NQEP). Basic and acidic residues-rich tracts occupy residues 176–190 (IEKR…EERH) and 199–214 (SEIR…DERR). One can recognise a tr-type G domain in the interval 340–509 (PRPPVVTIMG…LLQAEMLDLK (170 aa)). A G1 region spans residues 349–356 (GHVDHGKT). 349–356 (GHVDHGKT) serves as a coordination point for GTP. The segment at 374–378 (GITQH) is G2. Residues 395–398 (DTPG) form a G3 region. GTP-binding positions include 395 to 399 (DTPGH) and 449 to 452 (NKID). The G4 stretch occupies residues 449–452 (NKID). Positions 485-487 (SAK) are G5.

It belongs to the TRAFAC class translation factor GTPase superfamily. Classic translation factor GTPase family. IF-2 subfamily.

The protein resides in the cytoplasm. In terms of biological role, one of the essential components for the initiation of protein synthesis. Protects formylmethionyl-tRNA from spontaneous hydrolysis and promotes its binding to the 30S ribosomal subunits. Also involved in the hydrolysis of GTP during the formation of the 70S ribosomal complex. The protein is Translation initiation factor IF-2 of Bartonella tribocorum (strain CIP 105476 / IBS 506).